The sequence spans 496 residues: Flotillin-like protein 3 (496 aa).

A lipid anchor (S-palmitoyl cysteine) is attached at Cys37. Residues 301–328 are a coiled coil; it reads VVREAELQLEVERKNALRLTEKLKAEKL.

The protein belongs to the band 7/mec-2 family. Flotillin subfamily. In terms of processing, may be palmitoylated.

The protein resides in the cell membrane. The protein localises to the membrane. It localises to the caveola. Its function is as follows. May act as a scaffolding protein within caveolar membranes, functionally participating in formation of caveolae or caveolae-like vesicles. In Oryza sativa subsp. japonica (Rice), this protein is Flotillin-like protein 3 (FLOT3).